A 423-amino-acid chain; its full sequence is Glycine amidinotransferase, mitochondrial (423 aa).

A mitochondrion-targeting transit peptide spans 1 to 43 (MLRVRCLRGGSRGAEAVHYIGSRLGGSLTGWVQRTFQSTQAAT). Residues Ser-46 and Ser-49 each carry the phosphoserine modification. Position 170 (Asp-170) interacts with arginine. Catalysis depends on residues Asp-254 and His-303. Arginine-binding residues include Asp-305, Arg-322, Ser-354, and Ser-355. Lys-385 bears the N6-acetyllysine mark. Cys-407 acts as the Amidino-cysteine intermediate in catalysis.

It belongs to the amidinotransferase family. Homodimer. Highly expressed in the kidney and pancreas, especially in the proximal tubules of the kidney, and alpha cells of the pancreatic islets (at protein level). Moderately expressed in liver hepatocytes (at protein level). Expressed in the kidney, pancreas, liver, colon, ileum, jejunum, heart and skeletal muscle. In reproductive tissues, expressed in the testis, epididymis, ovary, oviduct and uterus. Expressed throughout the brain in neurons, astrocytes and oligodendrocytes. In 12.5 dpc embryos, it is expressed in the middle part of the somites, hepatic primordium and wall of the dorsal aorta. Expressed in 15.5 dpc embryos in isolated cells throughout the central nervous system, skeletal muscles, gonad primordia, caudal somites, liver and pancreas, but not in the choroid plexus, root ganglia or kidney. Expressed in skeletal muscle, kidney, pancreas, central nervous system, liver and intestine epithelial cells, but not in epidermis, dermis, olfactory epithelium, trachea, lung, stomach or heart in 18.5 dpc embryos.

The protein resides in the mitochondrion inner membrane. It catalyses the reaction L-arginine + glycine = guanidinoacetate + L-ornithine. It carries out the reaction 4-aminobutanoate + L-arginine = 4-guanidinobutanoate + L-ornithine. The catalysed reaction is beta-alanine + L-arginine = 3-guanidinopropanoate + L-ornithine. The enzyme catalyses taurine + L-arginine = taurocyamine + L-ornithine. It participates in amine and polyamine biosynthesis; creatine biosynthesis; creatine from L-arginine and glycine: step 1/2. Functionally, transamidinase that catalyzes the transfer of the amidino group of L-arginine onto the amino moiety of acceptor metabolites such as glycine, beta-alanine, gamma-aminobutyric acid (GABA) and taurine yielding the corresponding guanidine derivatives. Catalyzes the rate-limiting step of creatine biosynthesis, namely the transfer of the amidino group from L-arginine to glycine to generate guanidinoacetate, which is then methylated by GAMT to form creatine. Provides creatine as a source for ATP generation in tissues with high energy demands, in particular skeletal muscle, heart and brain. The protein is Glycine amidinotransferase, mitochondrial (Gatm) of Rattus norvegicus (Rat).